Here is a 333-residue protein sequence, read N- to C-terminus: Adenosine deaminase (333 aa).

Zn(2+) is bound by residues histidine 12 and histidine 14. Substrate contacts are provided by histidine 14, aspartate 16, and glycine 170. Residue histidine 197 participates in Zn(2+) binding. The active-site Proton donor is glutamate 200. Zn(2+) is bound at residue aspartate 278. Aspartate 279 lines the substrate pocket.

This sequence belongs to the metallo-dependent hydrolases superfamily. Adenosine and AMP deaminases family. Adenosine deaminase subfamily. Zn(2+) serves as cofactor.

The catalysed reaction is adenosine + H2O + H(+) = inosine + NH4(+). The enzyme catalyses 2'-deoxyadenosine + H2O + H(+) = 2'-deoxyinosine + NH4(+). Functionally, catalyzes the hydrolytic deamination of adenosine and 2-deoxyadenosine. In Escherichia coli O81 (strain ED1a), this protein is Adenosine deaminase.